The following is a 213-amino-acid chain: Orotate phosphoribosyltransferase (213 aa).

Lysine 26 lines the 5-phospho-alpha-D-ribose 1-diphosphate pocket. Orotate is bound at residue 34–35 (FF). 5-phospho-alpha-D-ribose 1-diphosphate-binding positions include 72–73 (YK), arginine 99, lysine 100, lysine 103, histidine 105, and 124–132 (DDVITAGTA). Orotate-binding residues include threonine 128 and arginine 156.

It belongs to the purine/pyrimidine phosphoribosyltransferase family. PyrE subfamily. Homodimer. It depends on Mg(2+) as a cofactor.

It carries out the reaction orotidine 5'-phosphate + diphosphate = orotate + 5-phospho-alpha-D-ribose 1-diphosphate. The protein operates within pyrimidine metabolism; UMP biosynthesis via de novo pathway; UMP from orotate: step 1/2. In terms of biological role, catalyzes the transfer of a ribosyl phosphate group from 5-phosphoribose 1-diphosphate to orotate, leading to the formation of orotidine monophosphate (OMP). In Salmonella paratyphi A (strain ATCC 9150 / SARB42), this protein is Orotate phosphoribosyltransferase.